The primary structure comprises 198 residues: Proteasome subunit beta 1 (198 aa).

Positions 1–6 are cleaved as a propeptide — removed in mature form; by autocatalysis; the sequence is MSGPGA. The active-site Nucleophile is Thr-7.

Belongs to the peptidase T1B family. The 20S proteasome core is composed of 14 alpha and 14 beta subunits that assemble into four stacked heptameric rings, resulting in a barrel-shaped structure. The two inner rings, each composed of seven catalytic beta subunits, are sandwiched by two outer rings, each composed of seven alpha subunits. The catalytic chamber with the active sites is on the inside of the barrel. Has a gated structure, the ends of the cylinder being occluded by the N-termini of the alpha-subunits. Is capped at one or both ends by the proteasome regulatory ATPase, PAN.

Its subcellular location is the cytoplasm. The catalysed reaction is Cleavage of peptide bonds with very broad specificity.. With respect to regulation, the formation of the proteasomal ATPase PAN-20S proteasome complex, via the docking of the C-termini of PAN into the intersubunit pockets in the alpha-rings, triggers opening of the gate for substrate entry. Interconversion between the open-gate and close-gate conformations leads to a dynamic regulation of the 20S proteasome proteolysis activity. Functionally, component of the proteasome core, a large protease complex with broad specificity involved in protein degradation. The protein is Proteasome subunit beta 1 of Ignicoccus hospitalis (strain KIN4/I / DSM 18386 / JCM 14125).